A 146-amino-acid polypeptide reads, in one-letter code: Small ribosomal subunit protein bS16 (146 aa).

The disordered stretch occupies residues 119–146 (GSENKGGKSKKAEEKSAEKTAEKSEGEA). A compositionally biased stretch (basic and acidic residues) spans 128–146 (KKAEEKSAEKTAEKSEGEA).

It belongs to the bacterial ribosomal protein bS16 family.

The chain is Small ribosomal subunit protein bS16 from Thermobifida fusca (strain YX).